The following is a 503-amino-acid chain: Glycerol kinase (503 aa).

Threonine 14 lines the ADP pocket. Positions 14, 15, and 16 each coordinate ATP. Sn-glycerol 3-phosphate is bound at residue threonine 14. Position 18 (arginine 18) interacts with ADP. 4 residues coordinate sn-glycerol 3-phosphate: arginine 84, glutamate 85, tyrosine 136, and aspartate 246. The glycerol site is built by arginine 84, glutamate 85, tyrosine 136, aspartate 246, and glutamine 247. 2 residues coordinate ADP: threonine 268 and glycine 311. Threonine 268, glycine 311, glutamine 315, and glycine 412 together coordinate ATP. Residues glycine 412 and asparagine 416 each contribute to the ADP site.

The protein belongs to the FGGY kinase family. As to quaternary structure, homotetramer and homodimer (in equilibrium). Heterodimer with EIIA-Glc. Binds 1 zinc ion per glycerol kinase EIIA-Glc dimer. The zinc ion is important for dimerization.

The enzyme catalyses glycerol + ATP = sn-glycerol 3-phosphate + ADP + H(+). The protein operates within polyol metabolism; glycerol degradation via glycerol kinase pathway; sn-glycerol 3-phosphate from glycerol: step 1/1. Its activity is regulated as follows. Activity of this regulatory enzyme is affected by several metabolites. Allosterically and non-competitively inhibited by fructose 1,6-bisphosphate (FBP) and unphosphorylated phosphocarrier protein EIIA-Glc (III-Glc), an integral component of the bacterial phosphotransferase (PTS) system. Functionally, key enzyme in the regulation of glycerol uptake and metabolism. Catalyzes the phosphorylation of glycerol to yield sn-glycerol 3-phosphate. The chain is Glycerol kinase from Klebsiella pneumoniae (strain 342).